The primary structure comprises 159 residues: UPF0303 protein Ping_1243 (159 aa).

Belongs to the UPF0303 family.

This chain is UPF0303 protein Ping_1243, found in Psychromonas ingrahamii (strain DSM 17664 / CCUG 51855 / 37).